The primary structure comprises 333 residues: N-acetyl-gamma-glutamyl-phosphate reductase (333 aa).

Cysteine 136 is a catalytic residue.

Belongs to the NAGSA dehydrogenase family. Type 1 subfamily.

Its subcellular location is the cytoplasm. The catalysed reaction is N-acetyl-L-glutamate 5-semialdehyde + phosphate + NADP(+) = N-acetyl-L-glutamyl 5-phosphate + NADPH + H(+). Its pathway is amino-acid biosynthesis; L-arginine biosynthesis; N(2)-acetyl-L-ornithine from L-glutamate: step 3/4. Its function is as follows. Catalyzes the NADPH-dependent reduction of N-acetyl-5-glutamyl phosphate to yield N-acetyl-L-glutamate 5-semialdehyde. This chain is N-acetyl-gamma-glutamyl-phosphate reductase, found in Xylella fastidiosa (strain 9a5c).